The primary structure comprises 172 residues: MASSYRKPTVASTSQKRKVGPKPELTEEQKQEVREAFDLFDADGSGTIDVKELKVAMRALGFEPRKEEMKRMIADVDKEGTGKISFNDFLAVMTQKMAEKDTKEEILKAFRLFDDDETGKISFKNLKRVAKELGENLTDEELQEMIDEADRDGDGEVNEDEFLRIMKKTNLY.

The disordered stretch occupies residues 1 to 30 (MASSYRKPTVASTSQKRKVGPKPELTEEQK). 4 consecutive EF-hand domains span residues 28–63 (EQKQEVREAFDLFDADGSGTIDVKELKVAMRALGFE), 64–99 (PRKEEMKRMIADVDKEGTGKISFNDFLAVMTQKMAE), 101–136 (DTKEEILKAFRLFDDDETGKISFKNLKRVAKELGEN), and 137–172 (LTDEELQEMIDEADRDGDGEVNEDEFLRIMKKTNLY). Residues Asp41, Asp43, Ser45, Thr47, and Glu52 each coordinate Ca(2+). Positions 150, 152, 154, 156, and 161 each coordinate Ca(2+).

The protein belongs to the centrin family. As to quaternary structure, monomer. Interacts with CIMAP3. Interacts with USP49.

It localises to the cytoplasm. The protein localises to the cytoskeleton. Its subcellular location is the microtubule organizing center. It is found in the centrosome. Plays a fundamental role in microtubule-organizing center structure and function. Plays a role in sperm cilia formation. This is Centrin-1 (CETN1) from Bos taurus (Bovine).